A 317-amino-acid polypeptide reads, in one-letter code: Ribose-phosphate pyrophosphokinase (317 aa).

ATP-binding positions include 41–43 (DME) and 100–101 (RQ). Residues His134 and Asp174 each coordinate Mg(2+). Lys197 is an active-site residue. Residues Arg199, Asp223, and 227–231 (DSGGT) each bind D-ribose 5-phosphate.

The protein belongs to the ribose-phosphate pyrophosphokinase family. Class I subfamily. In terms of assembly, homohexamer. Requires Mg(2+) as cofactor.

The protein localises to the cytoplasm. The catalysed reaction is D-ribose 5-phosphate + ATP = 5-phospho-alpha-D-ribose 1-diphosphate + AMP + H(+). It participates in metabolic intermediate biosynthesis; 5-phospho-alpha-D-ribose 1-diphosphate biosynthesis; 5-phospho-alpha-D-ribose 1-diphosphate from D-ribose 5-phosphate (route I): step 1/1. Functionally, involved in the biosynthesis of the central metabolite phospho-alpha-D-ribosyl-1-pyrophosphate (PRPP) via the transfer of pyrophosphoryl group from ATP to 1-hydroxyl of ribose-5-phosphate (Rib-5-P). In Bradyrhizobium diazoefficiens (strain JCM 10833 / BCRC 13528 / IAM 13628 / NBRC 14792 / USDA 110), this protein is Ribose-phosphate pyrophosphokinase.